Consider the following 662-residue polypeptide: DNA ligase (662 aa).

NAD(+)-binding positions include 31 to 35, 80 to 81, and glutamate 109; these read DYEYD and SL. Catalysis depends on lysine 111, which acts as the N6-AMP-lysine intermediate. NAD(+)-binding residues include arginine 132, glutamate 166, lysine 282, and lysine 306. Residues cysteine 400, cysteine 403, cysteine 418, and cysteine 423 each contribute to the Zn(2+) site. The 82-residue stretch at 581 to 662 folds into the BRCT domain; the sequence is KVNNIFEGKT…FEEMLKGENI (82 aa).

Belongs to the NAD-dependent DNA ligase family. LigA subfamily. The cofactor is Mg(2+). It depends on Mn(2+) as a cofactor.

The enzyme catalyses NAD(+) + (deoxyribonucleotide)n-3'-hydroxyl + 5'-phospho-(deoxyribonucleotide)m = (deoxyribonucleotide)n+m + AMP + beta-nicotinamide D-nucleotide.. Its function is as follows. DNA ligase that catalyzes the formation of phosphodiester linkages between 5'-phosphoryl and 3'-hydroxyl groups in double-stranded DNA using NAD as a coenzyme and as the energy source for the reaction. It is essential for DNA replication and repair of damaged DNA. The chain is DNA ligase from Thermoanaerobacter pseudethanolicus (strain ATCC 33223 / 39E) (Clostridium thermohydrosulfuricum).